We begin with the raw amino-acid sequence, 53 residues long: Small ribosomal subunit protein uS14 (53 aa).

The Zn(2+) site is built by C18, C21, C36, and C39.

This sequence belongs to the universal ribosomal protein uS14 family. Zinc-binding uS14 subfamily. Part of the 30S ribosomal subunit. Requires Zn(2+) as cofactor.

Binds 16S rRNA, required for the assembly of 30S particles. In Thermoplasma volcanium (strain ATCC 51530 / DSM 4299 / JCM 9571 / NBRC 15438 / GSS1), this protein is Small ribosomal subunit protein uS14.